Reading from the N-terminus, the 312-residue chain is Calcium-independent mitochondrial carrier protein SCaMC-3L (312 aa).

Solcar repeat units follow at residues 27–113 (GTLW…SKNF), 121–206 (QLFQ…LQCL), and 217–304 (PSGL…MKKT). Helical transmembrane passes span 33–50 (LLSG…TAPL), 88–107 (GNGI…FSVC), 131–144 (SLAV…INPM), 182–200 (YLPN…LAVY), 219–243 (GLVS…LTLV), and 279–298 (GMTP…YLVY).

It belongs to the mitochondrial carrier (TC 2.A.29) family. As to expression, mainly expressed in testis and at lesser levels in brain.

It is found in the mitochondrion inner membrane. It catalyses the reaction Mg(2+)(out) + phosphate(in) + ATP(out) = Mg(2+)(in) + phosphate(out) + ATP(in). It carries out the reaction ADP(out) + phosphate(in) + H(+)(out) = ADP(in) + phosphate(out) + H(+)(in). In terms of biological role, calcium-independent ATP-Mg/Pi exchanger that catalyzes the electroneutral exchange of Mg-ATP or free ADP against an hydrogenphosphate and participates in the net transport of adenine nucleotides across the mitochondria inner membrane. This Mus musculus (Mouse) protein is Calcium-independent mitochondrial carrier protein SCaMC-3L.